A 1328-amino-acid chain; its full sequence is Mitogen-activated protein kinase kinase kinase 19 (1328 aa).

A compositionally biased stretch (basic and acidic residues) spans 1-19; sequence MSSMPKPERHAESLLDICH. Disordered regions lie at residues 1–28, 44–74, 344–380, and 524–561; these read MSSM…PTDL, RSEE…QDWQ, VREE…AKNY, and QEND…GPIK. Positions 344-361 are enriched in basic and acidic residues; the sequence is VREEDIDCHGSKTRKPEE. Residues 364 to 377 are compositionally biased toward polar residues; sequence SQYLSSRKNESSVA. Residues 524–542 show a composition bias toward basic and acidic residues; that stretch reads QENDKHKMNSHRSKLDSKT. The region spanning 1061–1324 is the Protein kinase domain; sequence WTKGEILGKG…ALQLLKHSFL (264 aa). ATP is bound by residues 1067-1075 and K1089; that span reads LGKGAYGTV. Residue D1186 is the Proton acceptor of the active site.

It belongs to the protein kinase superfamily. STE Ser/Thr protein kinase family. STE20 subfamily.

It catalyses the reaction L-seryl-[protein] + ATP = O-phospho-L-seryl-[protein] + ADP + H(+). The catalysed reaction is L-threonyl-[protein] + ATP = O-phospho-L-threonyl-[protein] + ADP + H(+). The protein is Mitogen-activated protein kinase kinase kinase 19 (MAP3K19) of Homo sapiens (Human).